The sequence spans 1006 residues: Cytosolic carboxypeptidase 3 (1006 aa).

One can recognise a Peptidase M14 domain in the interval 304-576 (YPYTYSNLQE…HFCDSLLDYC (273 aa)). Residues H368, E371, and H464 each coordinate Zn(2+). Catalysis depends on E540, which acts as the Proton donor/acceptor. The segment at 790-810 (ESHHQLKSKAKRCSSFQSKRT) is disordered.

Belongs to the peptidase M14 family. Zn(2+) is required as a cofactor. As to expression, widely expressed. Expressed abundantly in tissues with m otile cilia such as testis, lung and trachea. Abundantly expressed in pituitary and kidney, moderately expressed in brain, eye, fat, pancreas, stomach, and adrenal.

The protein localises to the cytoplasm. It is found in the cytosol. The enzyme catalyses (L-glutamyl)(n+1)-gamma-L-glutamyl-L-glutamyl-[protein] + H2O = (L-glutamyl)(n)-gamma-L-glutamyl-L-glutamyl-[protein] + L-glutamate. In terms of biological role, metallocarboxypeptidase that mediates deglutamylation of tubulin and non-tubulin target proteins. Catalyzes the removal of polyglutamate side chains present on the gamma-carboxyl group of glutamate residues within the C-terminal tail of tubulin protein. Specifically cleaves tubulin long-side-chains, while it is not able to remove the branching point glutamate. Also catalyzes the removal of polyglutamate residues from the carboxy-terminus of non-tubulin proteins such as MYLK. May catalyze the hydrolysis of aspartate from the carboxy-terminus of target proteins. Does not show detyrosinase or deglycylase activities from the carboxy-terminus of target proteins. This is Cytosolic carboxypeptidase 3 from Mus musculus (Mouse).